The sequence spans 402 residues: Multidrug resistance protein MdtH (402 aa).

Topologically, residues 1–12 (MSRVSQARNLGK) are cytoplasmic. Residues 13 to 33 (YFLLIDNMLVVLGFFVVFPLI) form a helical membrane-spanning segment. At 34–98 (SIRFVDQMGW…GFATMGIAHE (65 aa)) the chain is on the periplasmic side. The helical transmembrane segment at 99–116 (PWLLWFSCFLSGLGGTLF) threads the bilayer. The Cytoplasmic segment spans residues 117–138 (DPPRSALVVKLIRPEQRGRFFS). Residues 139-159 (LLMMQDSAGAVIGALLGSWLL) form a helical membrane-spanning segment. The Periplasmic portion of the chain corresponds to 160–164 (QYDFR). The helical transmembrane segment at 165–185 (LVCATGAILFILCALFNAWLL) threads the bilayer. Residues 186–213 (PAWKLSTVRTPVREGMRRVMSDKRFVTY) are Cytoplasmic-facing. Residues 214–234 (VLTLAGYYMLAVQVMLMLPIM) traverse the membrane as a helical segment. The Periplasmic segment spans residues 235–243 (VNDIAGSPA). A helical transmembrane segment spans residues 244–264 (AVKWMYAIEACLSLTLLYPIA). Topologically, residues 265-276 (RWSEKRFRLEHR) are cytoplasmic. The helical transmembrane segment at 277–297 (LMAGLLVMSLSMLPIGMVGNL) threads the bilayer. The Periplasmic segment spans residues 298–299 (QQ). A helical transmembrane segment spans residues 300 to 320 (LFTLICAFYIGSVIAEPARET). Over 321–339 (LSASLADARARGSYMGFSR) the chain is Cytoplasmic. Residues 340–360 (LGLAIGGAIGYIGGGWLFDMG) traverse the membrane as a helical segment. Residues 361 to 367 (KALAQPE) lie on the Periplasmic side of the membrane. A helical membrane pass occupies residues 368-388 (LPWMMLGIIGFITFLALGWQF). Topologically, residues 389–402 (SHKRTPRRMLEPGA) are cytoplasmic.

This sequence belongs to the major facilitator superfamily. DHA1 family. MdtH (TC 2.A.1.2.21) subfamily.

It is found in the cell inner membrane. The chain is Multidrug resistance protein MdtH from Salmonella agona (strain SL483).